A 158-amino-acid polypeptide reads, in one-letter code: Cyclic pyranopterin monophosphate synthase (158 aa).

Substrate contacts are provided by residues 75–77 and 113–114; these read LCH and ME. The active site involves aspartate 128.

It belongs to the MoaC family. As to quaternary structure, homohexamer; trimer of dimers.

It carries out the reaction (8S)-3',8-cyclo-7,8-dihydroguanosine 5'-triphosphate = cyclic pyranopterin phosphate + diphosphate. It functions in the pathway cofactor biosynthesis; molybdopterin biosynthesis. Its function is as follows. Catalyzes the conversion of (8S)-3',8-cyclo-7,8-dihydroguanosine 5'-triphosphate to cyclic pyranopterin monophosphate (cPMP). This is Cyclic pyranopterin monophosphate synthase from Vibrio campbellii (strain ATCC BAA-1116).